Here is a 63-residue protein sequence, read N- to C-terminus: Anionic peptide NDBP7 (63 aa).

The first 20 residues, 1-20 (MISRFCLLFLLVFVVSKIQA), serve as a signal peptide directing secretion.

The protein belongs to the non-disulfide-bridged peptide (NDBP) superfamily. Long chain multifunctional peptide (group 2) family. As to expression, expressed by the venom gland.

The protein localises to the secreted. This chain is Anionic peptide NDBP7, found in Lychas mucronatus (Chinese swimming scorpion).